The primary structure comprises 88 residues: Putative transposase InsN for insertion sequence element IS911B (88 aa).

The protein belongs to the transposase 8 family.

Its function is as follows. Involved in the transposition of the insertion sequence IS911. The sequence is that of Putative transposase InsN for insertion sequence element IS911B (insN2) from Escherichia coli (strain K12).